Reading from the N-terminus, the 386-residue chain is Alanine racemase (386 aa).

The Proton acceptor; specific for D-alanine role is filled by Lys-38. Position 38 is an N6-(pyridoxal phosphate)lysine (Lys-38). Arg-136 is a substrate binding site. Residue Tyr-267 is the Proton acceptor; specific for L-alanine of the active site. Residue Met-315 participates in substrate binding.

The protein belongs to the alanine racemase family. The cofactor is pyridoxal 5'-phosphate.

It carries out the reaction L-alanine = D-alanine. Its pathway is amino-acid biosynthesis; D-alanine biosynthesis; D-alanine from L-alanine: step 1/1. Catalyzes the interconversion of L-alanine and D-alanine. May also act on other amino acids. The polypeptide is Alanine racemase (alr) (Clostridium perfringens (strain ATCC 13124 / DSM 756 / JCM 1290 / NCIMB 6125 / NCTC 8237 / Type A)).